Reading from the N-terminus, the 187-residue chain is Ribosome-recycling factor (187 aa).

The protein belongs to the RRF family.

Its subcellular location is the cytoplasm. In terms of biological role, responsible for the release of ribosomes from messenger RNA at the termination of protein biosynthesis. May increase the efficiency of translation by recycling ribosomes from one round of translation to another. This Flavobacterium psychrophilum (strain ATCC 49511 / DSM 21280 / CIP 103535 / JIP02/86) protein is Ribosome-recycling factor.